A 259-amino-acid chain; its full sequence is Deoxyribose-phosphate aldolase (259 aa).

D102 serves as the catalytic Proton donor/acceptor. K167 serves as the catalytic Schiff-base intermediate with acetaldehyde. K201 (proton donor/acceptor) is an active-site residue.

It belongs to the DeoC/FbaB aldolase family. DeoC type 2 subfamily.

It is found in the cytoplasm. It carries out the reaction 2-deoxy-D-ribose 5-phosphate = D-glyceraldehyde 3-phosphate + acetaldehyde. It participates in carbohydrate degradation; 2-deoxy-D-ribose 1-phosphate degradation; D-glyceraldehyde 3-phosphate and acetaldehyde from 2-deoxy-alpha-D-ribose 1-phosphate: step 2/2. Catalyzes a reversible aldol reaction between acetaldehyde and D-glyceraldehyde 3-phosphate to generate 2-deoxy-D-ribose 5-phosphate. The polypeptide is Deoxyribose-phosphate aldolase (Serratia proteamaculans (strain 568)).